We begin with the raw amino-acid sequence, 493 residues long: Glycerol kinase (493 aa).

Position 12 (Thr12) interacts with ADP. Residues Thr12, Thr13, and Ser14 each contribute to the ATP site. Sn-glycerol 3-phosphate is bound at residue Thr12. Arg16 is an ADP binding site. Residues Arg82, Glu83, Tyr132, and Asp239 each coordinate sn-glycerol 3-phosphate. Arg82, Glu83, Tyr132, Asp239, and Gln240 together coordinate glycerol. ADP contacts are provided by Thr261 and Gly303. Positions 261, 303, 307, and 402 each coordinate ATP. The ADP site is built by Gly402 and Asn406.

The protein belongs to the FGGY kinase family.

The enzyme catalyses glycerol + ATP = sn-glycerol 3-phosphate + ADP + H(+). The protein operates within polyol metabolism; glycerol degradation via glycerol kinase pathway; sn-glycerol 3-phosphate from glycerol: step 1/1. In terms of biological role, key enzyme in the regulation of glycerol uptake and metabolism. Catalyzes the phosphorylation of glycerol to yield sn-glycerol 3-phosphate. The chain is Glycerol kinase from Thermococcus onnurineus (strain NA1).